The chain runs to 525 residues: Erythropoietin receptor (525 aa).

Positions 1 to 32 (MGAPSSLLFSTAHWRTVPFLLAFWVLLSTGTA) are cleaved as a signal peptide. At 33 to 249 (EDPTMTPEFL…TIATIIDLRL (217 aa)) the chain is on the extracellular side. C58 and C68 are oxidised to a cystine. N-linked (GlcNAc...) asparagine glycans are attached at residues N77, N100, N149, and N185. The cysteines at positions 91 and 107 are disulfide-linked. A Fibronectin type-III domain is found at 146–246 (PPLNVTVKEK…APITIATIID (101 aa)). The WSXWS motif signature appears at 232-236 (WSDWT). Residues 250-270 (LLLLSIAIFVALIAGVGVYIF) form a helical membrane-spanning segment. At 271–525 (MRHGMYLKHK…NFLAPIYSQS (255 aa)) the chain is on the cytoplasmic side. Positions 281-289 (VWPQVPTPE) match the Box 1 motif motif. Disordered regions lie at residues 434–459 (APRM…QSIP) and 492–513 (LDMS…QNSP). Residues 447 to 459 (ENSVSSDGKQSIP) show a composition bias toward polar residues. Positions 487–492 (LKYAYL) match the ITIM motif motif.

This sequence belongs to the type I cytokine receptor family. Type 1 subfamily. Expressed in the ventral blood island from stage 28 through to stage 36. Expressed in the circulating blood by stage 40. In the adult, highly expressed in peripheral blood cells including immature erythrocytes and basophils, and moderately expressed in the hematopoietic organs: liver, kidney and spleen. Expressed at a low level in adult brain.

The protein resides in the cell membrane. Functionally, receptor for erythropoietin. Mediates erythropoietin-induced erythroblast proliferation and differentiation. This chain is Erythropoietin receptor, found in Xenopus laevis (African clawed frog).